The primary structure comprises 141 residues: Sigma factor binding protein 2, chloroplastic (141 aa).

The segment covering 1–20 (MDQSSSTLLINQRKSSSSPT) has biased composition (polar residues). The disordered stretch occupies residues 1-36 (MDQSSSTLLINQRKSSSSPTRIPPKQKRKSTTTHKP). The N-terminal 38 residues, 1 to 38 (MDQSSSTLLINQRKSSSSPTRIPPKQKRKSTTTHKPIK), are a transit peptide targeting the chloroplast. The short motif at 13–29 (RKSSSSPTRIPPKQKRK) is the Bipartite nuclear localization signal element. Residues 24–36 (PKQKRKSTTTHKP) show a composition bias toward basic residues. The VQ signature appears at 55 to 64 (FRELVQELTG).

In terms of assembly, interacts with sigma factors in chloroplast. Interacts with WRKY33 in the nucleus.

The protein resides in the plastid. The protein localises to the chloroplast. It is found in the nucleus. Functionally, functions as activator of WRKY33 in plant defense against necrotrophic pathogens by stimulating the DNA-binding activity of WRKY33. The polypeptide is Sigma factor binding protein 2, chloroplastic (SIB2) (Arabidopsis thaliana (Mouse-ear cress)).